A 108-amino-acid polypeptide reads, in one-letter code: Nucleoid-associated protein HEAR1046 (108 aa).

Residues 86–108 (TSQEKMAGATAGMPMPPGFKMPF) are disordered. The span at 99 to 108 (PMPPGFKMPF) shows a compositional bias: pro residues.

This sequence belongs to the YbaB/EbfC family. In terms of assembly, homodimer.

The protein localises to the cytoplasm. It is found in the nucleoid. Binds to DNA and alters its conformation. May be involved in regulation of gene expression, nucleoid organization and DNA protection. The sequence is that of Nucleoid-associated protein HEAR1046 from Herminiimonas arsenicoxydans.